A 221-amino-acid chain; its full sequence is MSKPSLELKGATFTLSVLHINSSDLNAVMAELDSKLAQAPQFFLGAPLVVNLSAIQDSNFNLRGLKELLLSRQLVIVGITGATTVLSNQAKTLGLAIVKAGKQTASPPPAPRQTKVLKQNIRSGQQVYAKNGDLIIFGAVGNGAEVIADGSIHIYGALRGKAMAGAAGDTTAVIIAHSLEAELVSIAGQYWLAENLQQHSSDKSGCIRLNGESLIVESLPL.

The protein belongs to the MinC family. Interacts with MinD and FtsZ.

Cell division inhibitor that blocks the formation of polar Z ring septums. Rapidly oscillates between the poles of the cell to destabilize FtsZ filaments that have formed before they mature into polar Z rings. Prevents FtsZ polymerization. This chain is Probable septum site-determining protein MinC, found in Shewanella oneidensis (strain ATCC 700550 / JCM 31522 / CIP 106686 / LMG 19005 / NCIMB 14063 / MR-1).